Consider the following 134-residue polypeptide: Cell division protein SepF 1 (134 aa).

This sequence belongs to the SepF family. In terms of assembly, homodimer. Interacts with FtsZ.

It is found in the cytoplasm. In terms of biological role, cell division protein that is part of the divisome complex and is recruited early to the Z-ring. Probably stimulates Z-ring formation, perhaps through the cross-linking of FtsZ protofilaments. Its function overlaps with FtsA. The polypeptide is Cell division protein SepF 1 (Streptomyces avermitilis (strain ATCC 31267 / DSM 46492 / JCM 5070 / NBRC 14893 / NCIMB 12804 / NRRL 8165 / MA-4680)).